The sequence spans 398 residues: Succinyl-diaminopimelate desuccinylase (398 aa).

Residue His-73 participates in Zn(2+) binding. Asp-75 is an active-site residue. Zn(2+) is bound at residue Asp-106. Glu-140 (proton acceptor) is an active-site residue. Zn(2+)-binding residues include Glu-141, Glu-169, and His-366.

This sequence belongs to the peptidase M20A family. DapE subfamily. Homodimer. It depends on Zn(2+) as a cofactor. Co(2+) serves as cofactor.

The enzyme catalyses N-succinyl-(2S,6S)-2,6-diaminopimelate + H2O = (2S,6S)-2,6-diaminopimelate + succinate. The protein operates within amino-acid biosynthesis; L-lysine biosynthesis via DAP pathway; LL-2,6-diaminopimelate from (S)-tetrahydrodipicolinate (succinylase route): step 3/3. Catalyzes the hydrolysis of N-succinyl-L,L-diaminopimelic acid (SDAP), forming succinate and LL-2,6-diaminopimelate (DAP), an intermediate involved in the bacterial biosynthesis of lysine and meso-diaminopimelic acid, an essential component of bacterial cell walls. This chain is Succinyl-diaminopimelate desuccinylase, found in Agrobacterium fabrum (strain C58 / ATCC 33970) (Agrobacterium tumefaciens (strain C58)).